Consider the following 506-residue polypeptide: ATP synthase subunit alpha (506 aa).

Position 170-177 (170-177 (GDRQTGKT)) interacts with ATP.

It belongs to the ATPase alpha/beta chains family. As to quaternary structure, F-type ATPases have 2 components, CF(1) - the catalytic core - and CF(0) - the membrane proton channel. CF(1) has five subunits: alpha(3), beta(3), gamma(1), delta(1), epsilon(1). CF(0) has four main subunits: a(1), b(1), b'(1) and c(9-12).

The protein localises to the cellular thylakoid membrane. The catalysed reaction is ATP + H2O + 4 H(+)(in) = ADP + phosphate + 5 H(+)(out). Produces ATP from ADP in the presence of a proton gradient across the membrane. The alpha chain is a regulatory subunit. The polypeptide is ATP synthase subunit alpha (Synechococcus sp. (strain JA-3-3Ab) (Cyanobacteria bacterium Yellowstone A-Prime)).